Consider the following 219-residue polypeptide: Ribosomal RNA large subunit methyltransferase E (219 aa).

S-adenosyl-L-methionine is bound by residues Gly60, Trp62, Asp85, Asp101, and Asp126. The active-site Proton acceptor is Lys166.

This sequence belongs to the class I-like SAM-binding methyltransferase superfamily. RNA methyltransferase RlmE family.

The protein resides in the cytoplasm. It carries out the reaction uridine(2552) in 23S rRNA + S-adenosyl-L-methionine = 2'-O-methyluridine(2552) in 23S rRNA + S-adenosyl-L-homocysteine + H(+). In terms of biological role, specifically methylates the uridine in position 2552 of 23S rRNA at the 2'-O position of the ribose in the fully assembled 50S ribosomal subunit. This chain is Ribosomal RNA large subunit methyltransferase E, found in Bordetella avium (strain 197N).